Here is a 407-residue protein sequence, read N- to C-terminus: Putative two-component response regulator ARR19 (407 aa).

The 116-residue stretch at 35–150 (NVLVVDTNFT…VMANIWQHIV (116 aa)) folds into the Response regulatory domain. D86 carries the 4-aspartylphosphate modification. Positions 214–217 (RKPR) match the Nuclear localization signal motif. The segment at residues 217-271 (RMTWTEELHQKFLEAIEIIGGIEKANPKVLVECLQEMRIEGITRSNVASHLQKHR) is a DNA-binding region (myb-like GARP).

The protein belongs to the ARR family. Type-B subfamily. Binds the target DNA as a monomer. In terms of processing, two-component system major event consists of a His-to-Asp phosphorelay between a sensor histidine kinase (HK) and a response regulator (RR). In plants, the His-to-Asp phosphorelay involves an additional intermediate named Histidine-containing phosphotransfer protein (HPt). This multistep phosphorelay consists of a His-Asp-His-Asp sequential transfer of a phosphate group between first a His and an Asp of the HK protein, followed by the transfer to a conserved His of the HPt protein and finally the transfer to an Asp in the receiver domain of the RR protein. As to expression, detected in trichomes and siliques.

Its subcellular location is the nucleus. Functionally, putative transcriptional activator that binds specifically to the DNA sequence 5'-[AG]GATT-3'. Functions as a response regulator involved in His-to-Asp phosphorelay signal transduction system. Phosphorylation of the Asp residue in the receiver domain activates the ability of the protein to promote the transcription of target genes. Could directly activate some type-A response regulators in response to cytokinins. The chain is Putative two-component response regulator ARR19 (ARR19) from Arabidopsis thaliana (Mouse-ear cress).